The sequence spans 476 residues: Methylenetetrahydrofolate--tRNA-(uracil-5-)-methyltransferase TrmFO (476 aa).

Residue 14-19 (GGGLAG) participates in FAD binding.

It belongs to the MnmG family. TrmFO subfamily. FAD is required as a cofactor.

Its subcellular location is the cytoplasm. The enzyme catalyses uridine(54) in tRNA + (6R)-5,10-methylene-5,6,7,8-tetrahydrofolate + NADH + H(+) = 5-methyluridine(54) in tRNA + (6S)-5,6,7,8-tetrahydrofolate + NAD(+). It catalyses the reaction uridine(54) in tRNA + (6R)-5,10-methylene-5,6,7,8-tetrahydrofolate + NADPH + H(+) = 5-methyluridine(54) in tRNA + (6S)-5,6,7,8-tetrahydrofolate + NADP(+). Its function is as follows. Catalyzes the folate-dependent formation of 5-methyl-uridine at position 54 (M-5-U54) in all tRNAs. This chain is Methylenetetrahydrofolate--tRNA-(uracil-5-)-methyltransferase TrmFO, found in Brucella anthropi (strain ATCC 49188 / DSM 6882 / CCUG 24695 / JCM 21032 / LMG 3331 / NBRC 15819 / NCTC 12168 / Alc 37) (Ochrobactrum anthropi).